Reading from the N-terminus, the 465-residue chain is ATP synthase subunit beta (465 aa).

153-160 serves as a coordination point for ATP; that stretch reads GGAGVGKT.

This sequence belongs to the ATPase alpha/beta chains family. F-type ATPases have 2 components, CF(1) - the catalytic core - and CF(0) - the membrane proton channel. CF(1) has five subunits: alpha(3), beta(3), gamma(1), delta(1), epsilon(1). CF(0) has three main subunits: a(1), b(2) and c(9-12). The alpha and beta chains form an alternating ring which encloses part of the gamma chain. CF(1) is attached to CF(0) by a central stalk formed by the gamma and epsilon chains, while a peripheral stalk is formed by the delta and b chains.

It localises to the cell membrane. It carries out the reaction ATP + H2O + 4 H(+)(in) = ADP + phosphate + 5 H(+)(out). Functionally, produces ATP from ADP in the presence of a proton gradient across the membrane. The catalytic sites are hosted primarily by the beta subunits. The sequence is that of ATP synthase subunit beta from Clostridium perfringens (strain SM101 / Type A).